A 449-amino-acid chain; its full sequence is Naphthalene 1,2-dioxygenase system, large oxygenase component (449 aa).

Residues 39 to 137 form the Rieske domain; the sequence is WLFLTHDSLI…LDKKCMGLKE (99 aa). The [2Fe-2S] cluster site is built by cysteine 81, histidine 83, cysteine 101, and histidine 104. Fe cation contacts are provided by histidine 208, histidine 213, and aspartate 362.

Belongs to the bacterial ring-hydroxylating dioxygenase alpha subunit family. The naphthalene dioxygenase (NDO) multicomponent enzyme system is composed of an electron transfer component and a dioxygenase component (iron sulfur protein (ISP)). The electron transfer component is composed of a ferredoxin reductase (NdoR) and a ferredoxin (NdoA), and the dioxygenase component is formed of a heterohexamer (trimer of heterodimers) of three large alpha subunits (NdoB) and three small beta subunits (NdoC). [2Fe-2S] cluster serves as cofactor. The cofactor is Fe(2+).

The enzyme catalyses naphthalene + NADH + O2 + H(+) = (1R,2S)-1,2-dihydronaphthalene-1,2-diol + NAD(+). It participates in aromatic compound metabolism; naphthalene degradation. Its function is as follows. Component of the naphthalene dioxygenase (NDO) multicomponent enzyme system which catalyzes the incorporation of both atoms of molecular oxygen into naphthalene to form cis-(1R,2S)-dihydroxy-1,2-dihydronaphthalene. The alpha subunit has a catalytic role in the holoenzyme. The sequence is that of Naphthalene 1,2-dioxygenase system, large oxygenase component from Pseudomonas aeruginosa.